An 87-amino-acid polypeptide reads, in one-letter code: Exodeoxyribonuclease 7 small subunit (87 aa).

Belongs to the XseB family. As to quaternary structure, heterooligomer composed of large and small subunits.

It is found in the cytoplasm. The enzyme catalyses Exonucleolytic cleavage in either 5'- to 3'- or 3'- to 5'-direction to yield nucleoside 5'-phosphates.. In terms of biological role, bidirectionally degrades single-stranded DNA into large acid-insoluble oligonucleotides, which are then degraded further into small acid-soluble oligonucleotides. In Pelotomaculum thermopropionicum (strain DSM 13744 / JCM 10971 / SI), this protein is Exodeoxyribonuclease 7 small subunit.